The chain runs to 332 residues: Arabinogalactan endo-beta-1,4-galactanase (332 aa).

N-linked (GlcNAc...) asparagine glycosylation occurs at Asn111. The Proton donor role is filled by Glu135. The active-site Nucleophile is the Glu245.

Belongs to the glycosyl hydrolase 53 family.

It carries out the reaction The enzyme specifically hydrolyzes (1-&gt;4)-beta-D-galactosidic linkages in type I arabinogalactans.. This Humicola insolens (Soft-rot fungus) protein is Arabinogalactan endo-beta-1,4-galactanase.